A 281-amino-acid chain; its full sequence is Formamidopyrimidine-DNA glycosylase (281 aa).

Pro2 serves as the catalytic Schiff-base intermediate with DNA. Residue Glu3 is the Proton donor of the active site. The active-site Proton donor; for beta-elimination activity is the Lys58. 3 residues coordinate DNA: His94, Arg113, and Arg156. Residues 241-281 form an FPG-type; degenerate zinc finger; that stretch reads AVYDRVGQPCPGCDCDVARTGGIERMVQSGRSTFFCGRRQR. Arg271 serves as the catalytic Proton donor; for delta-elimination activity.

The protein belongs to the FPG family. In terms of assembly, monomer. Requires Zn(2+) as cofactor.

It carries out the reaction Hydrolysis of DNA containing ring-opened 7-methylguanine residues, releasing 2,6-diamino-4-hydroxy-5-(N-methyl)formamidopyrimidine.. It catalyses the reaction 2'-deoxyribonucleotide-(2'-deoxyribose 5'-phosphate)-2'-deoxyribonucleotide-DNA = a 3'-end 2'-deoxyribonucleotide-(2,3-dehydro-2,3-deoxyribose 5'-phosphate)-DNA + a 5'-end 5'-phospho-2'-deoxyribonucleoside-DNA + H(+). Functionally, involved in base excision repair of DNA damaged by oxidation or by mutagenic agents. Acts as a DNA glycosylase that recognizes and removes damaged bases. Has a preference for oxidized purines, such as 7,8-dihydro-8-oxoguanine (8-oxoG). Has AP (apurinic/apyrimidinic) lyase activity and introduces nicks in the DNA strand. Cleaves the DNA backbone by beta-delta elimination to generate a single-strand break at the site of the removed base with both 3'- and 5'-phosphates. The sequence is that of Formamidopyrimidine-DNA glycosylase from Rhodospirillum rubrum (strain ATCC 11170 / ATH 1.1.1 / DSM 467 / LMG 4362 / NCIMB 8255 / S1).